A 150-amino-acid chain; its full sequence is Transcriptional repressor NrdR (150 aa).

A zinc finger lies at 3 to 34 (CPFCGYEDTFVIDTREIEDQKVIRRRRECPNC). Residues 49–139 (IMVIKKDGRR…VYQEFSSLEE (91 aa)) enclose the ATP-cone domain.

It belongs to the NrdR family. Requires Zn(2+) as cofactor.

Functionally, negatively regulates transcription of bacterial ribonucleotide reductase nrd genes and operons by binding to NrdR-boxes. The sequence is that of Transcriptional repressor NrdR from Dictyoglomus turgidum (strain DSM 6724 / Z-1310).